The sequence spans 22 residues: Caerin-3.5 (22 aa).

Lys-22 is subject to Lysine amide.

Expressed by the skin dorsal glands.

Its subcellular location is the secreted. Its function is as follows. Shows significant activity against Gram-positive organisms, but is less effective against Gram-negative organisms. This Ranoidea gracilenta (Dainty green tree frog) protein is Caerin-3.5.